Consider the following 106-residue polypeptide: ATP-dependent Clp protease adapter protein ClpS (106 aa).

Residues 1 to 10 are compositionally biased toward basic and acidic residues; sequence MSQKTVHDQD. Residues 1-22 are disordered; that stretch reads MSQKTVHDQDNALLLETGNTKV.

It belongs to the ClpS family. As to quaternary structure, binds to the N-terminal domain of the chaperone ClpA.

Involved in the modulation of the specificity of the ClpAP-mediated ATP-dependent protein degradation. In Xylella fastidiosa (strain 9a5c), this protein is ATP-dependent Clp protease adapter protein ClpS.